We begin with the raw amino-acid sequence, 222 residues long: tRNA (guanine-N(1)-)-methyltransferase (222 aa).

S-adenosyl-L-methionine contacts are provided by residues Gly-111 and 131 to 136 (LGNYVI).

This sequence belongs to the RNA methyltransferase TrmD family. As to quaternary structure, homodimer.

It localises to the cytoplasm. The catalysed reaction is guanosine(37) in tRNA + S-adenosyl-L-methionine = N(1)-methylguanosine(37) in tRNA + S-adenosyl-L-homocysteine + H(+). Its function is as follows. Specifically methylates guanosine-37 in various tRNAs. The protein is tRNA (guanine-N(1)-)-methyltransferase of Leptospira borgpetersenii serovar Hardjo-bovis (strain JB197).